The chain runs to 197 residues: MFEYLNGKLVKISPTNIVIDLSGIGYLISVANPYAWSALMNTEVKIYVHQVIREDAHSLYGFVNESEKALFLRLISVSGIGPKSALAIIAAADNEGLINAIDNSDIKYLTKFPGVGKKTAMQMVLDLAGKFDATGAVGISLLDAAPASNLALEEAIEALQALGYKATELKKIEKKLAQEAGLTSEEYIKSALKLMMK.

Residues 1 to 63 (MFEYLNGKLV…EDAHSLYGFV (63 aa)) are domain I. The domain II stretch occupies residues 64 to 142 (NESEKALFLR…ATGAVGISLL (79 aa)). A flexible linker region spans residues 142–146 (LDAAP). Residues 147–197 (ASNLALEEAIEALQALGYKATELKKIEKKLAQEAGLTSEEYIKSALKLMMK) form a domain III region.

The protein belongs to the RuvA family. Homotetramer. Forms an RuvA(8)-RuvB(12)-Holliday junction (HJ) complex. HJ DNA is sandwiched between 2 RuvA tetramers; dsDNA enters through RuvA and exits via RuvB. An RuvB hexamer assembles on each DNA strand where it exits the tetramer. Each RuvB hexamer is contacted by two RuvA subunits (via domain III) on 2 adjacent RuvB subunits; this complex drives branch migration. In the full resolvosome a probable DNA-RuvA(4)-RuvB(12)-RuvC(2) complex forms which resolves the HJ.

The protein resides in the cytoplasm. The RuvA-RuvB-RuvC complex processes Holliday junction (HJ) DNA during genetic recombination and DNA repair, while the RuvA-RuvB complex plays an important role in the rescue of blocked DNA replication forks via replication fork reversal (RFR). RuvA specifically binds to HJ cruciform DNA, conferring on it an open structure. The RuvB hexamer acts as an ATP-dependent pump, pulling dsDNA into and through the RuvAB complex. HJ branch migration allows RuvC to scan DNA until it finds its consensus sequence, where it cleaves and resolves the cruciform DNA. This is Holliday junction branch migration complex subunit RuvA from Lactococcus lactis subsp. cremoris (strain MG1363).